Reading from the N-terminus, the 171-residue chain is Protein FAM209A (171 aa).

An N-terminal signal peptide occupies residues 1 to 19 (MWTLKSSLVLLLCLTCSYA). The Extracellular portion of the chain corresponds to 20–52 (FMFSSLRQKTSEPQGKVQYGEHFRIRQNLPEHT). A helical transmembrane segment spans residues 53 to 73 (QGWLGSKWLWLLFVVVPFVIL). Topologically, residues 74–171 (QCQRDSEKNK…CEIWGEESSS (98 aa)) are cytoplasmic. The tract at residues 81-107 (KNKEQSPPGLRGGQLHSPLKKKRNASP) is disordered. Residues 114–139 (NTLMELEVELMKFVSKVRNLKRAMAT) are a coiled coil.

Belongs to the FAM209 family. As to quaternary structure, interacts with DPY19L2. Interacts with CYLC1; the interaction may be relevant for proper acrosome attachment to the nuclear envelope.

It localises to the nucleus inner membrane. Functionally, may play a role in sperm acrosome biogenesis. The sequence is that of Protein FAM209A from Homo sapiens (Human).